The following is a 961-amino-acid chain: FYVE, RhoGEF and PH domain-containing protein 1 (961 aa).

A compositionally biased stretch (gly residues) spans 1 to 11 (MHGHRAPGGAG). The tract at residues 1 to 353 (MHGHRAPGGA…DEEEEEEKDR (353 aa)) is disordered. The span at 27–38 (PPACADSDPGAS) shows a compositional bias: low complexity. At Ser48 the chain carries Phosphoserine. Over residues 125-135 (PHPEGPQRLRS) the composition is skewed to basic and acidic residues. Composition is skewed to pro residues over residues 156-165 (GPKPQVPPKP) and 172-190 (RMPPPLEPIPPPPSRPLPA). Positions 171 to 187 (PRMPPPLEPIPPPPSRP) match the SH3-binding motif. The segment covering 199-213 (APRAEASPSSAAVSS) has biased composition (low complexity). At Ser205 the chain carries Phosphoserine. Residues 231–255 (VPGPSPGPPEPVMLPQPTSQPPVPQ) show a composition bias toward pro residues. Basic and acidic residues predominate over residues 273–284 (RDGEKVPNRDSG). 2 stretches are compositionally biased toward low complexity: residues 285-294 (IDSISSPSNS) and 316-325 (ALASVPVALA). The segment covering 335–351 (VDSDLEEEDDEEEEEEK) has biased composition (acidic residues). In terms of domain architecture, DH spans 373-561 (KVFHIANELL…ATAAEHSNAA (189 aa)). The region spanning 590-689 (ELIKEGHILK…WVQAINSTLL (100 aa)) is the PH 1 domain. The interval 702-726 (NSTNREDEDTPPNSPNVDLGKRAPT) is disordered. Residue Thr711 is modified to Phosphothreonine. Residue Ser715 is modified to Phosphoserine. The segment at 730 to 790 (EKEVTMCMRC…VCTDCYVALH (61 aa)) adopts an FYVE-type zinc-finger fold. Zn(2+) is bound by residues Cys736, Cys739, Cys753, Cys756, Cys761, Cys764, Cys782, and Cys785. The region spanning 821–921 (NSVICSFLHY…WMAVLGRAGR (101 aa)) is the PH 2 domain. The interval 925 to 961 (FCPGPTLSEDREMEEAPVAALGATAEPPESPQTRDKT) is disordered.

Interacts with DBNL/ABP1 and CTTN. May interact with CCPG1. Binds CDC42. In terms of tissue distribution, expressed in fetal heart, brain, lung, kidney and placenta. Less expressed in liver; adult heart, brain, lung, pancreas and skeletal muscle.

The protein resides in the cytoplasm. It is found in the cell projection. It localises to the lamellipodium. Its subcellular location is the ruffle. The protein localises to the cytoskeleton. Activates CDC42, a member of the Ras-like family of Rho- and Rac proteins, by exchanging bound GDP for free GTP. Plays a role in regulating the actin cytoskeleton and cell shape. This is FYVE, RhoGEF and PH domain-containing protein 1 (FGD1) from Homo sapiens (Human).